The primary structure comprises 346 residues: Holliday junction branch migration complex subunit RuvB (346 aa).

Basic and acidic residues predominate over residues 1–16 (MSDADRLITPEKRGED). The interval 1–23 (MSDADRLITPEKRGEDIDTTLRP) is disordered. Residues 1-182 (MSDADRLITP…FGIPVRLAFY (182 aa)) are large ATPase domain (RuvB-L). ATP is bound by residues Leu-21, Arg-22, Gly-63, Lys-66, Thr-67, Thr-68, 129–131 (EDF), Arg-172, Tyr-182, and Arg-219. A Mg(2+)-binding site is contributed by Thr-67. The interval 183–253 (TVDELELIVR…IADEALTRLL (71 aa)) is small ATPAse domain (RuvB-S). The head domain (RuvB-H) stretch occupies residues 256-346 (NMGLDQLDMR…AQFRLTLEDD (91 aa)). 3 residues coordinate DNA: Arg-292, Arg-311, and Arg-316.

This sequence belongs to the RuvB family. As to quaternary structure, homohexamer. Forms an RuvA(8)-RuvB(12)-Holliday junction (HJ) complex. HJ DNA is sandwiched between 2 RuvA tetramers; dsDNA enters through RuvA and exits via RuvB. An RuvB hexamer assembles on each DNA strand where it exits the tetramer. Each RuvB hexamer is contacted by two RuvA subunits (via domain III) on 2 adjacent RuvB subunits; this complex drives branch migration. In the full resolvosome a probable DNA-RuvA(4)-RuvB(12)-RuvC(2) complex forms which resolves the HJ.

It localises to the cytoplasm. The catalysed reaction is ATP + H2O = ADP + phosphate + H(+). The RuvA-RuvB-RuvC complex processes Holliday junction (HJ) DNA during genetic recombination and DNA repair, while the RuvA-RuvB complex plays an important role in the rescue of blocked DNA replication forks via replication fork reversal (RFR). RuvA specifically binds to HJ cruciform DNA, conferring on it an open structure. The RuvB hexamer acts as an ATP-dependent pump, pulling dsDNA into and through the RuvAB complex. RuvB forms 2 homohexamers on either side of HJ DNA bound by 1 or 2 RuvA tetramers; 4 subunits per hexamer contact DNA at a time. Coordinated motions by a converter formed by DNA-disengaged RuvB subunits stimulates ATP hydrolysis and nucleotide exchange. Immobilization of the converter enables RuvB to convert the ATP-contained energy into a lever motion, pulling 2 nucleotides of DNA out of the RuvA tetramer per ATP hydrolyzed, thus driving DNA branch migration. The RuvB motors rotate together with the DNA substrate, which together with the progressing nucleotide cycle form the mechanistic basis for DNA recombination by continuous HJ branch migration. Branch migration allows RuvC to scan DNA until it finds its consensus sequence, where it cleaves and resolves cruciform DNA. This Agrobacterium fabrum (strain C58 / ATCC 33970) (Agrobacterium tumefaciens (strain C58)) protein is Holliday junction branch migration complex subunit RuvB.